A 592-amino-acid chain; its full sequence is Beta-fructofuranosidase, insoluble isoenzyme 1 (592 aa).

An N-terminal signal peptide occupies residues 1 to 39; sequence MGVTIRNRNYDHGSLPFLQSLLAILLVTTTTLHINGVEA. Positions 40-48 are excised as a propeptide; sequence FHEIHYNLQ. Residue Asp-74 is part of the active site. The N-linked (GlcNAc...) (complex) asparagine glycan is linked to Asn-170. Residue Asn-195 is glycosylated (N-linked (GlcNAc...) asparagine). Asn-311 carries N-linked (GlcNAc...) (complex) asparagine glycosylation. Asn-348 carries N-linked (GlcNAc...) (high mannose) asparagine glycosylation. A glycan (N-linked (GlcNAc...) asparagine) is linked at Asn-570.

This sequence belongs to the glycosyl hydrolase 32 family. In leaves and roots of young plants.

It is found in the secreted. Its subcellular location is the cell wall. It carries out the reaction Hydrolysis of terminal non-reducing beta-D-fructofuranoside residues in beta-D-fructofuranosides.. May play an important role in phloem unloading and in stress response. This Daucus carota (Wild carrot) protein is Beta-fructofuranosidase, insoluble isoenzyme 1 (INV1).